Consider the following 251-residue polypeptide: 1-(5-phosphoribosyl)-5-[(5-phosphoribosylamino)methylideneamino] imidazole-4-carboxamide isomerase (251 aa).

Aspartate 8 (proton acceptor) is an active-site residue. The Proton donor role is filled by aspartate 131.

This sequence belongs to the HisA/HisF family.

It is found in the cytoplasm. It carries out the reaction 1-(5-phospho-beta-D-ribosyl)-5-[(5-phospho-beta-D-ribosylamino)methylideneamino]imidazole-4-carboxamide = 5-[(5-phospho-1-deoxy-D-ribulos-1-ylimino)methylamino]-1-(5-phospho-beta-D-ribosyl)imidazole-4-carboxamide. It participates in amino-acid biosynthesis; L-histidine biosynthesis; L-histidine from 5-phospho-alpha-D-ribose 1-diphosphate: step 4/9. This chain is 1-(5-phosphoribosyl)-5-[(5-phosphoribosylamino)methylideneamino] imidazole-4-carboxamide isomerase, found in Burkholderia vietnamiensis (strain G4 / LMG 22486) (Burkholderia cepacia (strain R1808)).